A 562-amino-acid polypeptide reads, in one-letter code: Lamassu protein LmuB (562 aa).

In terms of biological role, component of antiviral defense system Lamassu type I, composed of LmuA and LmuB. Expression of Lamassu type I in B.subtilis (strain BEST7003) confers resistance to phages phi3T, SpBeta and SPR. May be an ATPase. This Bacillus sp. (strain NCIM 5461 / CCTCC AB 2011126 / NIO-1130) protein is Lamassu protein LmuB.